We begin with the raw amino-acid sequence, 149 residues long: Large ribosomal subunit protein uL24 (149 aa).

Belongs to the universal ribosomal protein uL24 family. Part of the 50S ribosomal subunit.

One of two assembly initiator proteins, it binds directly to the 5'-end of the 23S rRNA, where it nucleates assembly of the 50S subunit. Functionally, located at the polypeptide exit tunnel on the outside of the subunit. This is Large ribosomal subunit protein uL24 from Hyperthermus butylicus (strain DSM 5456 / JCM 9403 / PLM1-5).